A 1156-amino-acid polypeptide reads, in one-letter code: MSGYDNRDDYRHSSSSSHHRSRNSKHDSSSSSYRSHGYAPTRRRSRSPSSYHSSSRSHRDHTTDPYPNGSGHDRRHDRDRNRERDRRDHDSPIEAAPSPDGRRFHVEGAPRQGGRRRWDEGAPTPPTAAAPVHVSDPTRSSLNTQLPSRPIVAPPGMAPGPPPSLPSSTPIVPSTGISISPEEQAKLAKKARLEAWRKEQAAKKALEEARQRARSIASAVAPSSQRTESFSSSSTPQTAPTSINAAGLRTLSLRTDPSRTTAQNRSRTMMDDASESSKRIHLSRLGDLPPLDPSIDTAHIATTSVDAEDDDHQLGVAPPTQGSSAAAMDVDDDDEEEDPLDAFMLTVKSQVAQVNDDDRRKASASGGHERTQAKSKAVVLGRDDSDGEAEDQYEELDELDRVGMATEDLLALAAKKVKKKDLVTVDHSAIDYEPFNKAFYHPPAEIQDMSEELANQIRLEMDAITVRGRDCPKPLTKWSHCGLPASCLDVIKRLGYSAPTPIQSQAMPAIMSGRDIIGVAKTGSGKTMAFLLPMFRHIKDQRPVEPSEGPVGIIMTPTRELAVQIYREMRPFIKALGLRAACVYGGAPISEQIAEMKKTADIVVATPGRLIDLLTANSGRVTNLYRVTYLVLDEADRMFDMGFEPQVMKILNNIRPDRQTVLFSATFPKQMESLARKVLKNKPLEITVGGRSVVAAEIEQIVEVRSEDTKFHRLLEILGELYNREKDARTLIFVDRQEAADDLLKDLIRKGYVTMSLHGGKDQVDRDETISDFKAGNVPIVTATSVAARGLDVKQLKLVINYDVPNHMEDYVHRAGRTGRAGQKGTCITFITPEQDRYARDIIAALKASAAHVPPELEAMAASFKEKLAAGKAKAAGSGFGGKGLDRFELDREKTLKAQKSAYGEADDDAKAAAAGDSSEDKAKTGAPPGASSSEDQLSKIQGMKIEIMQGAAPESVRDNKTLSASQEASAAAAAAAAARSKAEPEQELKEAAQLKAQEAALEAAKAHGADTTKLAAVLENIRRQANARKEAAKNSELDKHKDRKARDPDATDYHAIVPINDFPQRARWRVTNKETMRHLIESTGASITNKGVFYKEGTEPQPGEPPKLQLLIESNTKSMVEDAVREIQRLLVEATQAVLEAEARNPGTTGRYTVV.

Composition is skewed to basic and acidic residues over residues 1–12 (MSGYDNRDDYRH) and 71–92 (GHDRRHDRDRNRERDRRDHDSP). Disordered regions lie at residues 1–177 (MSGY…STGI), 216–337 (IASA…DEEE), and 351–390 (VAQVNDDDRRKASASGGHERTQAKSKAVVLGRDDSDGEAE). Over residues 137 to 147 (PTRSSLNTQLP) the composition is skewed to polar residues. A compositionally biased stretch (pro residues) spans 152–165 (VAPPGMAPGPPPSL). Composition is skewed to low complexity over residues 166–175 (PSSTPIVPST) and 222–242 (PSSQRTESFSSSSTPQTAPTS). Residues 252-267 (SLRTDPSRTTAQNRSR) show a composition bias toward polar residues. Positions 356 to 372 (DDDRRKASASGGHERTQ) are enriched in basic and acidic residues. The Q motif motif lies at 476–504 (TKWSHCGLPASCLDVIKRLGYSAPTPIQS). The 179-residue stretch at 507–685 (MPAIMSGRDI…RKVLKNKPLE (179 aa)) folds into the Helicase ATP-binding domain. 520–527 (AKTGSGKT) contacts ATP. The short motif at 633 to 636 (DEAD) is the DEAD box element. The region spanning 697-861 (EIEQIVEVRS…HVPPELEAMA (165 aa)) is the Helicase C-terminal domain. Disordered regions lie at residues 900-937 (KSAYGEADDDAKAAAAGDSSEDKAKTGAPPGASSSEDQ) and 1028-1049 (ARKEAAKNSELDKHKDRKARDP).

Belongs to the DEAD box helicase family. DDX46/PRP5 subfamily.

It is found in the nucleus. It carries out the reaction ATP + H2O = ADP + phosphate + H(+). In terms of biological role, ATP-dependent RNA helicase involved spliceosome assembly and in nuclear splicing. Catalyzes an ATP-dependent conformational change of U2 snRNP. Bridges U1 and U2 snRNPs and enables stable U2 snRNP association with intron RNA. The polypeptide is Pre-mRNA-processing ATP-dependent RNA helicase PRP5 (PRP5) (Mycosarcoma maydis (Corn smut fungus)).